The primary structure comprises 119 residues: Basic phospholipase A2 taipoxin alpha chain (119 aa).

Intrachain disulfides connect cysteine 11-cysteine 72, cysteine 27-cysteine 118, cysteine 29-cysteine 45, cysteine 44-cysteine 99, cysteine 51-cysteine 92, cysteine 61-cysteine 85, and cysteine 79-cysteine 90. Residues tyrosine 28, glycine 30, and glycine 32 each coordinate Ca(2+). Residue histidine 48 is part of the active site. Aspartate 49 provides a ligand contact to Ca(2+). The active site involves aspartate 93.

This sequence belongs to the phospholipase A2 family. Group I subfamily. D49 sub-subfamily. As to quaternary structure, heterotrimer of alpha, beta, and gamma chains; non-covalently linked. Ca(2+) serves as cofactor. In terms of tissue distribution, expressed by the venom gland.

It is found in the secreted. The catalysed reaction is a 1,2-diacyl-sn-glycero-3-phosphocholine + H2O = a 1-acyl-sn-glycero-3-phosphocholine + a fatty acid + H(+). Functionally, heterotrimer: Snake venom phospholipase A2 (PLA2) heterotrimer that acts as a potent presynaptic neurotoxin by blocking synaptic transmission and synaptic vesicle recycling. May act by binding in a calcium-dependent fashion to neurotonal pentraxin-1 (NPTX1) and neurotonal pentraxin-2 (NPTX2), but not to neuronal pentraxin receptor (NPTXR). Also binds to taipoxin-associated calcium binding protein 49 (RCN2), a protein localized in the lumen of endoplasmic reticulum. Its function is as follows. Monomer (alpha chain): Snake venom phospholipase A2 (PLA2) alpha chain that possesses the same high enzymatic activity as the heterotrimer. PLA2 catalyzes the calcium-dependent hydrolysis of the 2-acyl groups in 3-sn-phosphoglycerides. This chain is Basic phospholipase A2 taipoxin alpha chain, found in Oxyuranus scutellatus scutellatus (Australian taipan).